The chain runs to 174 residues: MGKNVVVLGTQWGDEGKGKIVDLLTDQAAAVVRYQGGHNAGHTLVIDGEKTVLHLIPSGILRENVQCLIGNGVVVAPDALLREITKLEEKGVPVRERLRISPSCTLILPYHVALDQAREASRSEGKIGTTGRGIGPAYEDKVARRGLRIGDLFNPERFAVKLRELLEYHNFALQ.

Residues 13-19 and 41-43 contribute to the GTP site; these read GDEGKGK and GHT. The active-site Proton acceptor is D14. Mg(2+)-binding residues include D14 and G41. Residues 14–17, 39–42, T130, and R144 each bind IMP; these read DEGK and NAGH. H42 (proton donor) is an active-site residue.

It belongs to the adenylosuccinate synthetase family. In terms of assembly, homodimer. Mg(2+) is required as a cofactor.

The protein localises to the cytoplasm. It catalyses the reaction IMP + L-aspartate + GTP = N(6)-(1,2-dicarboxyethyl)-AMP + GDP + phosphate + 2 H(+). The protein operates within purine metabolism; AMP biosynthesis via de novo pathway; AMP from IMP: step 1/2. Its function is as follows. Plays an important role in the de novo pathway of purine nucleotide biosynthesis. Catalyzes the first committed step in the biosynthesis of AMP from IMP. In Stutzerimonas stutzeri (Pseudomonas stutzeri), this protein is Adenylosuccinate synthetase.